We begin with the raw amino-acid sequence, 818 residues long: Phenylalanine--tRNA ligase beta subunit (818 aa).

Residues 39–148 (AAELQKFEVA…EDAVVGENFT (110 aa)) enclose the tRNA-binding domain. In terms of domain architecture, B5 spans 423-498 (SQKKPLDFSA…RIYGYDKIES (76 aa)). Positions 476, 482, 485, and 486 each coordinate Mg(2+). Positions 724–817 (SDFQANFRDY…ISQKFQGTLR (94 aa)) constitute an FDX-ACB domain.

Belongs to the phenylalanyl-tRNA synthetase beta subunit family. Type 1 subfamily. In terms of assembly, tetramer of two alpha and two beta subunits. Mg(2+) serves as cofactor.

It localises to the cytoplasm. The enzyme catalyses tRNA(Phe) + L-phenylalanine + ATP = L-phenylalanyl-tRNA(Phe) + AMP + diphosphate + H(+). This Rickettsia conorii (strain ATCC VR-613 / Malish 7) protein is Phenylalanine--tRNA ligase beta subunit.